The chain runs to 311 residues: Manganese-dependent ADP-ribose/CDP-alcohol diphosphatase (311 aa).

Positions 17, 19, 64, 99, 218, 255, and 257 each coordinate Zn(2+).

Belongs to the ADPRibase-Mn family. As to quaternary structure, monomer. Mg(2+) serves as cofactor.

The enzyme catalyses CDP-choline + H2O = phosphocholine + CMP + 2 H(+). The catalysed reaction is ADP-D-ribose + H2O = D-ribose 5-phosphate + AMP + 2 H(+). It catalyses the reaction CDP-glycerol + H2O = sn-glycerol 3-phosphate + CMP + 2 H(+). In terms of biological role, hydrolyzes ADP-ribose, IDP-ribose, CDP-glycerol, CDP-choline and CDP-ethanolamine, but not other non-reducing ADP-sugars or CDP-glucose. This Arabidopsis thaliana (Mouse-ear cress) protein is Manganese-dependent ADP-ribose/CDP-alcohol diphosphatase.